Consider the following 143-residue polypeptide: Transcriptional regulator MraZ (143 aa).

SpoVT-AbrB domains follow at residues 5-47 (EYHH…PIEE) and 76-119 (AMES…SAER).

Belongs to the MraZ family. As to quaternary structure, forms oligomers.

The protein localises to the cytoplasm. The protein resides in the nucleoid. In Lactobacillus gasseri (strain ATCC 33323 / DSM 20243 / BCRC 14619 / CIP 102991 / JCM 1131 / KCTC 3163 / NCIMB 11718 / NCTC 13722 / AM63), this protein is Transcriptional regulator MraZ.